Reading from the N-terminus, the 485-residue chain is Glutamyl-tRNA(Gln) amidotransferase subunit A (485 aa).

Catalysis depends on charge relay system residues lysine 79 and serine 154. Serine 178 acts as the Acyl-ester intermediate in catalysis.

Belongs to the amidase family. GatA subfamily. Heterotrimer of A, B and C subunits.

It carries out the reaction L-glutamyl-tRNA(Gln) + L-glutamine + ATP + H2O = L-glutaminyl-tRNA(Gln) + L-glutamate + ADP + phosphate + H(+). Functionally, allows the formation of correctly charged Gln-tRNA(Gln) through the transamidation of misacylated Glu-tRNA(Gln) in organisms which lack glutaminyl-tRNA synthetase. The reaction takes place in the presence of glutamine and ATP through an activated gamma-phospho-Glu-tRNA(Gln). This is Glutamyl-tRNA(Gln) amidotransferase subunit A from Staphylococcus aureus (strain USA300 / TCH1516).